Reading from the N-terminus, the 464-residue chain is Alpha-2A adrenergic receptor (464 aa).

Topologically, residues 1 to 47 are extracellular; it reads MFRQEQRWPRQLWPMGSLQPDSGNASWNGTEGPGGGTRATPYSLQVT. Residues 13–34 are disordered; that stretch reads WPMGSLQPDSGNASWNGTEGPG. Positions 19 to 29 are enriched in polar residues; the sequence is QPDSGNASWNG. N-linked (GlcNAc...) asparagine glycosylation is found at asparagine 24 and asparagine 28. Residues 48–73 form a helical membrane-spanning segment; sequence VTLVCLVGLLILLTVFGNVLVIIAVF. Over 74 to 84 the chain is Cytoplasmic; that stretch reads TSRALKAPQNL. Residues 85 to 110 form a helical membrane-spanning segment; that stretch reads FLVSLASADILVATLVIPFSLANEVM. Over 111 to 120 the chain is Extracellular; sequence GYWYFGKAWC. The cysteines at positions 120 and 201 are disulfide-linked. A helical transmembrane segment spans residues 121–143; the sequence is EIYLALDVLFCTSSIVHLCAISL. The Cytoplasmic portion of the chain corresponds to 144–163; sequence DRYWSITQAIEYNLKRTPRR. The helical transmembrane segment at 164 to 187 threads the bilayer; sequence IKAIIVTVWVISAVISFPPLISFE. The Extracellular portion of the chain corresponds to 188-206; the sequence is KAGGGGQQPAEPRCEINDQ. A helical membrane pass occupies residues 207–231; it reads KWYVISSSIGSFFAPCLIMILVYVR. Over 232-388 the chain is Cytoplasmic; that stretch reads IYQIAKRRTR…RQNREKRFTF (157 aa). The tract at residues 240 to 378 is disordered; the sequence is TRVPPSRRGP…GGAKASRWRG (139 aa). The segment covering 251 to 268 has biased composition (low complexity); the sequence is AHAAAPPGGAERRPNGLG. A compositionally biased stretch (basic and acidic residues) spans 312-329; that stretch reads SSEHAERPPGARRPERGL. The residue at position 345 (serine 345) is a Phosphoserine. Residues 354 to 363 are compositionally biased toward gly residues; it reads AGSGTSGSGP. Omega-N-methylarginine is present on arginine 367. Residues 389 to 413 form a helical membrane-spanning segment; that stretch reads VLAVVIGVFVVCWFPFFFTYTLTAV. The Extracellular segment spans residues 414-423; that stretch reads GCSVPRTLFK. A helical membrane pass occupies residues 424-444; the sequence is FFFWFGYCNSSLNPVIYTIFN. Topologically, residues 445–464 are cytoplasmic; the sequence is HDFRRAFKKILCRGDRKRIV. Cysteine 456 is lipidated: S-palmitoyl cysteine.

The protein belongs to the G-protein coupled receptor 1 family. Adrenergic receptor subfamily. ADRA2A sub-subfamily. Component of the ADA2A-containing complex (ATAC), composed of KAT14, KAT2A, TADA2L, TADA3L, ZZ3, MBIP, WDR5, YEATS2, CCDC101 and DR1.

The protein resides in the cell membrane. Its function is as follows. Alpha-2 adrenergic receptors mediate the catecholamine-induced inhibition of adenylate cyclase through the action of G proteins. Component of the ATAC complex, a complex with histone acetyltransferase activity on histones H3 and H4. This chain is Alpha-2A adrenergic receptor, found in Cavia porcellus (Guinea pig).